The chain runs to 234 residues: Large ribosomal subunit protein uL3 (234 aa).

The segment at 137–156 is disordered; that stretch reads AGHGVERKHRSPGSVGGCAT.

It belongs to the universal ribosomal protein uL3 family. Part of the 50S ribosomal subunit. Forms a cluster with proteins L14 and L19.

In terms of biological role, one of the primary rRNA binding proteins, it binds directly near the 3'-end of the 23S rRNA, where it nucleates assembly of the 50S subunit. The protein is Large ribosomal subunit protein uL3 of Frankia alni (strain DSM 45986 / CECT 9034 / ACN14a).